We begin with the raw amino-acid sequence, 689 residues long: DNA topoisomerase 1 (689 aa).

Residues 3-113 (DNLVIVESPA…KENRVVFNEI (111 aa)) form the Toprim domain. Residues E9 and D82 each coordinate Mg(2+). Residues 129–557 (EMNLVDAQQA…FFSSFKQDVE (429 aa)) form the Topo IA-type catalytic domain. Residues 163–168 (SAGRVQ) form an interaction with DNA region. Y298 functions as the O-(5'-phospho-DNA)-tyrosine intermediate in the catalytic mechanism. Residues 328-357 (SKRKASGKQGDQDAHEAIRPSSTMRTPDDM) form a disordered region. 3 consecutive C4-type zinc fingers follow at residues 577–603 (CEVC…FPDC), 617–645 (CPKC…YPEC), and 658–681 (CPKC…CSNC).

The protein belongs to the type IA topoisomerase family. As to quaternary structure, monomer. Requires Mg(2+) as cofactor.

It carries out the reaction ATP-independent breakage of single-stranded DNA, followed by passage and rejoining.. In terms of biological role, releases the supercoiling and torsional tension of DNA, which is introduced during the DNA replication and transcription, by transiently cleaving and rejoining one strand of the DNA duplex. Introduces a single-strand break via transesterification at a target site in duplex DNA. The scissile phosphodiester is attacked by the catalytic tyrosine of the enzyme, resulting in the formation of a DNA-(5'-phosphotyrosyl)-enzyme intermediate and the expulsion of a 3'-OH DNA strand. The free DNA strand then undergoes passage around the unbroken strand, thus removing DNA supercoils. Finally, in the religation step, the DNA 3'-OH attacks the covalent intermediate to expel the active-site tyrosine and restore the DNA phosphodiester backbone. In Staphylococcus aureus (strain N315), this protein is DNA topoisomerase 1.